We begin with the raw amino-acid sequence, 1129 residues long: Large proline-rich protein bag6 (1129 aa).

The 76-residue stretch at 1 to 76 (MEVTVKTLDS…HLVERAPPQT (76 aa)) folds into the Ubiquitin-like domain. Disordered stretches follow at residues 69–108 (VERA…PERN), 187–235 (QPVN…SPSE), 347–402 (TGNG…HPHP), 490–518 (PAAP…VPGA), 550–606 (GSNT…QHLS), 654–692 (VPVS…ESLP), 942–967 (VPQA…NGAA), and 987–1009 (VPTI…QWAA). Residues 73 to 105 (PPQTQPSTGGPSTSSSTSPSSSNAANVPGAGAP) are compositionally biased toward low complexity. 2 stretches are compositionally biased toward polar residues: residues 209–232 (RETL…SHPS) and 364–383 (HTPT…QPPS). 2 stretches are compositionally biased toward low complexity: residues 553–593 (TPSS…SSGP) and 655–666 (PVSTSPPQSASQ). A compositionally biased stretch (pro residues) spans 667 to 686 (APPPSSPSPPPAHSSPPPAA). A compositionally biased stretch (polar residues) spans 947-956 (EASSQDQPME).

Component of the bag6/bat3 complex.

The protein resides in the cytoplasm. Its subcellular location is the cytosol. The protein localises to the nucleus. It localises to the secreted. It is found in the extracellular exosome. Its function is as follows. ATP-independent molecular chaperone preventing the aggregation of misfolded and hydrophobic patches-containing proteins. Functions as part of a cytosolic protein quality control complex, the bag6/bat3 complex, which maintains these client proteins in a soluble state and participates in their proper delivery to the endoplasmic reticulum or alternatively can promote their sorting to the proteasome where they undergo degradation. The bag6/bat3 complex is involved in the post-translational delivery of tail-anchored/type II transmembrane proteins to the endoplasmic reticulum membrane. Similarly, the bag6/bat3 complex also functions as a sorting platform for proteins of the secretory pathway that are mislocalized to the cytosol either delivering them to the proteasome for degradation or to the endoplasmic reticulum. The bag6/bat3 complex also plays a role in the endoplasmic reticulum-associated degradation (ERAD), a quality control mechanism that eliminates unwanted proteins of the endoplasmic reticulum through their retrotranslocation to the cytosol and their targeting to the proteasome. It maintains these retrotranslocated proteins in an unfolded yet soluble state condition in the cytosol to ensure their proper delivery to the proteasome. Also required for selective ubiquitin-mediated degradation of defective nascent chain polypeptides by the proteasome. Also involved in endoplasmic reticulum stress-induced pre-emptive quality control, a mechanism that selectively attenuates the translocation of newly synthesized proteins into the endoplasmic reticulum and reroutes them to the cytosol for proteasomal degradation. May ensure the proper degradation of these proteins and thereby protects the endoplasmic reticulum from protein overload upon stress. By stabilizing a large spectrum of proteins, may indirectly affect different biological processes including apoptosis. By controlling the steady-state expression of the IGF1R receptor, indirectly regulates the insulin-like growth factor receptor signaling pathway. When nuclear, may also act as a component of some chromatin regulator complex. The chain is Large proline-rich protein bag6 from Xenopus tropicalis (Western clawed frog).